Consider the following 203-residue polypeptide: MGKKINPILFRLKKNTVYHSLWYTFKKNFCYYLKCDILIREIIRRNFLFINLSYIDIIISNKLTINLYINNVDQFNIIENYLDVFVFQISKILKKNVILNFVFNHVLNAKNIAYNVVNQILNKNSIKKIIKEELLKNRKNFGCKIQISGRLEGVDIARKEWSLIGRIPLHTIKYNLEYYQCETLTQYGILGIKIWLFKKNNEK.

The region spanning 39 to 113 is the KH type-2 domain; the sequence is IREIIRRNFL…NHVLNAKNIA (75 aa).

The protein belongs to the universal ribosomal protein uS3 family. In terms of assembly, part of the 30S ribosomal subunit. Forms a tight complex with proteins S10 and S14.

In terms of biological role, binds the lower part of the 30S subunit head. Binds mRNA in the 70S ribosome, positioning it for translation. The protein is Small ribosomal subunit protein uS3 of Carsonella ruddii.